The following is a 119-amino-acid chain: uncharacterized protein (119 aa).

The tract at residues 55–119 (LSTEPPTPPS…SRLPPRSWTN (65 aa)) is disordered. A compositionally biased stretch (polar residues) spans 81–92 (LSYTRCHSTTYT).

This is an uncharacterized protein from Saccharomyces cerevisiae (strain ATCC 204508 / S288c) (Baker's yeast).